A 637-amino-acid chain; its full sequence is MNANPKFLAATAEVDAAAVAPLPKSRKVYETGSRPDIRVPFREIEQADTPTMFGGEKNPPLTVYDTSGPYTDPQASIDIRRGLPALRRAWIEERGDTEVLDGPTSDYGKERLTDPKLTAMRFDLQRPPRRARAGANVTQMHYARRGIVTPEMEFIALRENLRREHYLETLRASGPDGEKLAKRLLRQHPGQSFGAALPSAITPEFVREEVARGRAIIPANINHPEIEPMIIGRNFLVKINANIGNSAVSSGIGEEVEKMTWAIRWGGDTVMDLSTGKHIHETREWIIRNSPVPIGTVPIYQALEKVDGKAEELTWEIFRDTLIEQAEQGVDYFTIHAGVRLPFIPMTADRMTGIVSRGGSIMAKWCLAHHKESFLYERFEEICEIMKAYDVSFSLGDGLRPGSGYDANDEAQFAELKTLGELTQVAWKHDVQVMIEGPGHVPMQMIKENMELQLKHCDEAPFYTLGPLTTDIAPGYDHITSGIGAALIGWYGTAMLCYVTPKEHLGLPNKKDVKDGIITYKIAAHAADLAKGHPGAAIRDNALSKARFEFRWDDQFNLGLDPDTAKEFHDETLPKDSMKVAHFCSMCGPHFCSMKITQDVRDYAAAQGVSEKDALQQGMQEKAVEFVKKGAEVYHRT.

Substrate contacts are provided by residues Asn242, Met271, Tyr300, His336, 356-358 (SRG), 397-400 (DGLR), and Glu436. His440 is a binding site for Zn(2+). Tyr463 contributes to the substrate binding site. Residue His504 participates in Zn(2+) binding. Residues Cys584, Cys587, and Cys592 each coordinate [4Fe-4S] cluster.

This sequence belongs to the ThiC family. In terms of assembly, homodimer. [4Fe-4S] cluster is required as a cofactor.

It catalyses the reaction 5-amino-1-(5-phospho-beta-D-ribosyl)imidazole + S-adenosyl-L-methionine = 4-amino-2-methyl-5-(phosphooxymethyl)pyrimidine + CO + 5'-deoxyadenosine + formate + L-methionine + 3 H(+). Its pathway is cofactor biosynthesis; thiamine diphosphate biosynthesis. Catalyzes the synthesis of the hydroxymethylpyrimidine phosphate (HMP-P) moiety of thiamine from aminoimidazole ribotide (AIR) in a radical S-adenosyl-L-methionine (SAM)-dependent reaction. In Bordetella bronchiseptica (strain ATCC BAA-588 / NCTC 13252 / RB50) (Alcaligenes bronchisepticus), this protein is Phosphomethylpyrimidine synthase.